The sequence spans 165 residues: Transcription antitermination protein NusB (165 aa).

The protein belongs to the NusB family.

Involved in transcription antitermination. Required for transcription of ribosomal RNA (rRNA) genes. Binds specifically to the boxA antiterminator sequence of the ribosomal RNA (rrn) operons. The polypeptide is Transcription antitermination protein NusB (Rhodococcus erythropolis (strain PR4 / NBRC 100887)).